A 171-amino-acid chain; its full sequence is T-cell surface glycoprotein CD3 delta chain (171 aa).

Residues Met1–Pro21 form the signal peptide. Residues Phe22 to Ala105 are Extracellular-facing. Residues Cys37 and Cys73 are joined by a disulfide bond. 3 N-linked (GlcNAc...) asparagine glycosylation sites follow: Asn38, Asn54, and Asn74. Residues Gly106–Ala126 form a helical membrane-spanning segment. Residues Gly127 to Lys171 are Cytoplasmic-facing. The 29-residue stretch at Asp138 to Asn166 folds into the ITAM domain. Tyr149 and Tyr160 each carry phosphotyrosine.

As to quaternary structure, the TCR-CD3 complex is composed of a CD3D/CD3E and a CD3G/CD3E heterodimers that preferentially associate with TCRalpha and TCRbeta, respectively, to form TCRalpha/CD3E/CD3G and TCRbeta/CD3G/CD3E trimers. In turn, the hexamer interacts with CD3Z homodimer to form the TCR-CD3 complex. Alternatively, TCRalpha and TCRbeta can be replaced by TCRgamma and TCRdelta. Interacts with coreceptors CD4 and CD8. Post-translationally, phosphorylated on Tyr residues after T-cell receptor triggering by LCK in association with CD4/CD8. CD3D is mostly present on T-lymphocytes with its TCR-CD3 partners. Present also in fetal NK-cells.

The protein resides in the cell membrane. In terms of biological role, part of the TCR-CD3 complex present on T-lymphocyte cell surface that plays an essential role in adaptive immune response. When antigen presenting cells (APCs) activate T-cell receptor (TCR), TCR-mediated signals are transmitted across the cell membrane by the CD3 chains CD3D, CD3E, CD3G and CD3Z. All CD3 chains contain immunoreceptor tyrosine-based activation motifs (ITAMs) in their cytoplasmic domain. Upon TCR engagement, these motifs become phosphorylated by Src family protein tyrosine kinases LCK and FYN, resulting in the activation of downstream signaling pathways. In addition of this role of signal transduction in T-cell activation, CD3D plays an essential role in thymocyte differentiation. Indeed, participates in correct intracellular TCR-CD3 complex assembly and surface expression. In absence of a functional TCR-CD3 complex, thymocytes are unable to differentiate properly. Interacts with CD4 and CD8 and thus serves to establish a functional link between the TCR and coreceptors CD4 and CD8, which is needed for activation and positive selection of CD4 or CD8 T-cells. In Macaca fascicularis (Crab-eating macaque), this protein is T-cell surface glycoprotein CD3 delta chain (CD3D).